The chain runs to 87 residues: Insulin-related peptide 1 (87 aa).

An N-terminal signal peptide occupies residues Met1 to Ala19. The propeptide occupies Gln20–Ser44. An Arginine amide modification is found at Arg64. A propeptide spanning residues Gly68–Cys87 is cleaved from the precursor.

The protein belongs to the insulin family. DAGWWIPQHGHHALAGVR-amide: Expressed in corpora cardiaca (CC), corpora allata (CA), antennal lobe (AL) and gnathal ganglion (GNG) (at protein level). Expression in CC and CA detected in most animals, in AL and GNG in few animals (at protein level).

It is found in the secreted. This Agrotis ipsilon (Black cutworm moth) protein is Insulin-related peptide 1.